Consider the following 517-residue polypeptide: GMP synthase [glutamine-hydrolyzing] (517 aa).

One can recognise a Glutamine amidotransferase type-1 domain in the interval 9-199; sequence RILILDFGSQ…VLGVCGCERL (191 aa). Cys-86 (nucleophile) is an active-site residue. Residues His-173 and Glu-175 contribute to the active site. In terms of domain architecture, GMPS ATP-PPase spans 200-392; the sequence is WTSESIIEDA…LGLPYNMLYR (193 aa). An ATP-binding site is contributed by 227–233; the sequence is SGGVDSS.

As to quaternary structure, homodimer.

It catalyses the reaction XMP + L-glutamine + ATP + H2O = GMP + L-glutamate + AMP + diphosphate + 2 H(+). Its pathway is purine metabolism; GMP biosynthesis; GMP from XMP (L-Gln route): step 1/1. In terms of biological role, catalyzes the synthesis of GMP from XMP. This is GMP synthase [glutamine-hydrolyzing] from Vibrio cholerae serotype O1 (strain ATCC 39541 / Classical Ogawa 395 / O395).